Consider the following 461-residue polypeptide: Glycolipid 2-alpha-mannosyltransferase 2 (461 aa).

Residues 1-12 (MKPSIFYSSRQP) lie on the Cytoplasmic side of the membrane. A helical; Signal-anchor for type II membrane protein transmembrane segment spans residues 13–35 (YLKYLAIILTTITIYVLTHSSYS). Over residues 35 to 52 (SADPNINDVTTKPISETV) the composition is skewed to polar residues. The interval 35-138 (SADPNINDVT…SSSKDPVKPE (104 aa)) is disordered. Topologically, residues 36–461 (ADPNINDVTT…QKPKEWEKYQ (426 aa)) are lumenal. Composition is skewed to low complexity over residues 61-70 (SSPEQQQQQP) and 106-116 (PKSSSSSPQQQ). The span at 117-126 (EKQDTKKESE) shows a compositional bias: basic and acidic residues. Residue glutamate 349 is the Nucleophile of the active site.

This sequence belongs to the glycosyltransferase 15 family.

The protein localises to the golgi apparatus membrane. Involved in O-glycosylation of cell wall and secreted proteins. Transfers an alpha-D-mannosyl residue from GDP-mannose into lipid-linked oligosaccharide, forming an alpha-(1-&gt;2)-D-mannosyl-D-mannose linkage. Mainly responsible for the addition of the third mannose residue in an O-linked mannose pentamer. Can also substitute for MNT1 by adding the second mannose residue. Important for adherence to host surfaces and for virulence. The protein is Glycolipid 2-alpha-mannosyltransferase 2 (MNT2) of Candida albicans (strain SC5314 / ATCC MYA-2876) (Yeast).